We begin with the raw amino-acid sequence, 23 residues long: Cysteine proteinase (23 aa).

Positions 1–10 (ADSLDWREKG) are enriched in basic and acidic residues. The interval 1–23 (ADSLDWREKGVVNSIKDQAQXGS) is disordered.

It belongs to the peptidase C1 family.

The chain is Cysteine proteinase from Tritrichomonas foetus (Trichomonas foetus).